We begin with the raw amino-acid sequence, 606 residues long: NADH-ubiquinone oxidoreductase chain 5 (606 aa).

16 consecutive transmembrane segments (helical) span residues M1 to V21, Y35 to L55, L87 to Y107, I114 to A134, L140 to G160, A171 to S191, F211 to L233, T241 to V261, L272 to A292, I301 to N320, A325 to I347, L366 to L386, L413 to G433, L457 to T477, M482 to F502, and G582 to F602.

It belongs to the complex I subunit 5 family. Core subunit of respiratory chain NADH dehydrogenase (Complex I) which is composed of 45 different subunits.

The protein resides in the mitochondrion inner membrane. It catalyses the reaction a ubiquinone + NADH + 5 H(+)(in) = a ubiquinol + NAD(+) + 4 H(+)(out). Core subunit of the mitochondrial membrane respiratory chain NADH dehydrogenase (Complex I) which catalyzes electron transfer from NADH through the respiratory chain, using ubiquinone as an electron acceptor. Essential for the catalytic activity and assembly of complex I. The protein is NADH-ubiquinone oxidoreductase chain 5 (MT-ND5) of Balaenoptera musculus (Blue whale).